A 190-amino-acid chain; its full sequence is GTP cyclohydrolase 1 (190 aa).

Residues Cys75, His78, and Cys146 each coordinate Zn(2+).

This sequence belongs to the GTP cyclohydrolase I family. As to quaternary structure, toroid-shaped homodecamer, composed of two pentamers of five dimers.

It catalyses the reaction GTP + H2O = 7,8-dihydroneopterin 3'-triphosphate + formate + H(+). It functions in the pathway cofactor biosynthesis; 7,8-dihydroneopterin triphosphate biosynthesis; 7,8-dihydroneopterin triphosphate from GTP: step 1/1. This chain is GTP cyclohydrolase 1, found in Campylobacter jejuni subsp. jejuni serotype O:23/36 (strain 81-176).